A 201-amino-acid polypeptide reads, in one-letter code: Peptidyl-tRNA hydrolase (201 aa).

Tyr17 is a tRNA binding site. His22 (proton acceptor) is an active-site residue. TRNA contacts are provided by Tyr68, Asn70, and Asn116.

It belongs to the PTH family. Monomer.

The protein localises to the cytoplasm. It catalyses the reaction an N-acyl-L-alpha-aminoacyl-tRNA + H2O = an N-acyl-L-amino acid + a tRNA + H(+). Hydrolyzes ribosome-free peptidyl-tRNAs (with 1 or more amino acids incorporated), which drop off the ribosome during protein synthesis, or as a result of ribosome stalling. In terms of biological role, catalyzes the release of premature peptidyl moieties from peptidyl-tRNA molecules trapped in stalled 50S ribosomal subunits, and thus maintains levels of free tRNAs and 50S ribosomes. The sequence is that of Peptidyl-tRNA hydrolase from Lawsonia intracellularis (strain PHE/MN1-00).